We begin with the raw amino-acid sequence, 1170 residues long: DNA-directed RNA polymerase subunit beta' (1170 aa).

The Zn(2+) site is built by Cys60, Cys62, Cys75, and Cys78. Mg(2+)-binding residues include Asp449, Asp451, and Asp453. 4 residues coordinate Zn(2+): Cys774, Cys848, Cys855, and Cys858. Residues 1145 to 1170 are disordered; sequence EPGEENGEPGGERLYGMDELYGETAN.

The protein belongs to the RNA polymerase beta' chain family. As to quaternary structure, the RNAP catalytic core consists of 2 alpha, 1 beta, 1 beta' and 1 omega subunit. When a sigma factor is associated with the core the holoenzyme is formed, which can initiate transcription. Mg(2+) serves as cofactor. Zn(2+) is required as a cofactor.

The catalysed reaction is RNA(n) + a ribonucleoside 5'-triphosphate = RNA(n+1) + diphosphate. Its function is as follows. DNA-dependent RNA polymerase catalyzes the transcription of DNA into RNA using the four ribonucleoside triphosphates as substrates. This Pelotomaculum thermopropionicum (strain DSM 13744 / JCM 10971 / SI) protein is DNA-directed RNA polymerase subunit beta'.